The primary structure comprises 95 residues: Large ribosomal subunit protein eL37y (95 aa).

Zn(2+)-binding residues include Cys-19, Cys-22, Cys-34, and Cys-37. The C4-type zinc-finger motif lies at 19–37; sequence CVRCGRRSFHIQKSRCSAC.

Belongs to the eukaryotic ribosomal protein eL37 family. Requires Zn(2+) as cofactor.

In terms of biological role, binds to the 23S rRNA. This is Large ribosomal subunit protein eL37y (RPL37B) from Arabidopsis thaliana (Mouse-ear cress).